A 205-amino-acid polypeptide reads, in one-letter code: Holliday junction branch migration complex subunit RuvA (205 aa).

The segment at 1–64 (MIGRLRGIIL…EDAQLLYGFN (64 aa)) is domain I. Positions 65–143 (DKQERALFRE…GLNGDLFNNT (79 aa)) are domain II. The tract at residues 144 to 156 (GDIQLPASNSSQI) is flexible linker. The interval 157 to 205 (SDADIEAEAASALVALGYKPQEASRLVSKIAKPGADCETLIRDALRAAL) is domain III.

It belongs to the RuvA family. As to quaternary structure, homotetramer. Forms an RuvA(8)-RuvB(12)-Holliday junction (HJ) complex. HJ DNA is sandwiched between 2 RuvA tetramers; dsDNA enters through RuvA and exits via RuvB. An RuvB hexamer assembles on each DNA strand where it exits the tetramer. Each RuvB hexamer is contacted by two RuvA subunits (via domain III) on 2 adjacent RuvB subunits; this complex drives branch migration. In the full resolvosome a probable DNA-RuvA(4)-RuvB(12)-RuvC(2) complex forms which resolves the HJ.

The protein localises to the cytoplasm. In terms of biological role, the RuvA-RuvB-RuvC complex processes Holliday junction (HJ) DNA during genetic recombination and DNA repair, while the RuvA-RuvB complex plays an important role in the rescue of blocked DNA replication forks via replication fork reversal (RFR). RuvA specifically binds to HJ cruciform DNA, conferring on it an open structure. The RuvB hexamer acts as an ATP-dependent pump, pulling dsDNA into and through the RuvAB complex. HJ branch migration allows RuvC to scan DNA until it finds its consensus sequence, where it cleaves and resolves the cruciform DNA. The sequence is that of Holliday junction branch migration complex subunit RuvA from Yersinia enterocolitica serotype O:8 / biotype 1B (strain NCTC 13174 / 8081).